The primary structure comprises 134 residues: Profilin-3 (134 aa).

Cysteine 13 and cysteine 118 are disulfide-bonded. The Involved in PIP2 interaction motif lies at 84–100; that stretch reads AVIRGKKGSGGITIKKT. The residue at position 114 (threonine 114) is a Phosphothreonine.

Belongs to the profilin family. In terms of assembly, occurs in many kinds of cells as a complex with monomeric actin in a 1:1 ratio. In terms of processing, phosphorylated by MAP kinases.

It localises to the cytoplasm. Its subcellular location is the cytoskeleton. Its function is as follows. Binds to actin and affects the structure of the cytoskeleton. At high concentrations, profilin prevents the polymerization of actin, whereas it enhances it at low concentrations. The chain is Profilin-3 from Olea europaea (Common olive).